An 891-amino-acid polypeptide reads, in one-letter code: uncharacterized protein (891 aa).

This is an uncharacterized protein from Ictalurid herpesvirus 1 (strain Auburn) (IcHV-1).